Here is a 227-residue protein sequence, read N- to C-terminus: Phosphoribosylformylglycinamidine synthase subunit PurQ (227 aa).

Residues 3 to 227 (FAVCVFPGSN…LMLWYSLLSD (225 aa)) enclose the Glutamine amidotransferase type-1 domain. Residue Cys-86 is the Nucleophile of the active site. Residues His-203 and Glu-205 contribute to the active site.

As to quaternary structure, part of the FGAM synthase complex composed of 1 PurL, 1 PurQ and 2 PurS subunits.

The protein resides in the cytoplasm. The catalysed reaction is N(2)-formyl-N(1)-(5-phospho-beta-D-ribosyl)glycinamide + L-glutamine + ATP + H2O = 2-formamido-N(1)-(5-O-phospho-beta-D-ribosyl)acetamidine + L-glutamate + ADP + phosphate + H(+). The enzyme catalyses L-glutamine + H2O = L-glutamate + NH4(+). It participates in purine metabolism; IMP biosynthesis via de novo pathway; 5-amino-1-(5-phospho-D-ribosyl)imidazole from N(2)-formyl-N(1)-(5-phospho-D-ribosyl)glycinamide: step 1/2. In terms of biological role, part of the phosphoribosylformylglycinamidine synthase complex involved in the purines biosynthetic pathway. Catalyzes the ATP-dependent conversion of formylglycinamide ribonucleotide (FGAR) and glutamine to yield formylglycinamidine ribonucleotide (FGAM) and glutamate. The FGAM synthase complex is composed of three subunits. PurQ produces an ammonia molecule by converting glutamine to glutamate. PurL transfers the ammonia molecule to FGAR to form FGAM in an ATP-dependent manner. PurS interacts with PurQ and PurL and is thought to assist in the transfer of the ammonia molecule from PurQ to PurL. In Aquifex aeolicus (strain VF5), this protein is Phosphoribosylformylglycinamidine synthase subunit PurQ.